A 110-amino-acid chain; its full sequence is NADH-quinone oxidoreductase subunit K (110 aa).

A run of 3 helical transmembrane segments spans residues 7–27 (LGSYLLVGAMLFCLGLYGVFV), 31–51 (IIAILMSIELMLNAVNINFIA), and 73–93 (IFVIVVAAAEIAVGLALVIAI).

This sequence belongs to the complex I subunit 4L family. As to quaternary structure, NDH-1 is composed of 14 different subunits. Subunits NuoA, H, J, K, L, M, N constitute the membrane sector of the complex.

Its subcellular location is the cell membrane. The enzyme catalyses a quinone + NADH + 5 H(+)(in) = a quinol + NAD(+) + 4 H(+)(out). In terms of biological role, NDH-1 shuttles electrons from NADH, via FMN and iron-sulfur (Fe-S) centers, to quinones in the respiratory chain. The immediate electron acceptor for the enzyme in this species is believed to be a menaquinone. Couples the redox reaction to proton translocation (for every two electrons transferred, four hydrogen ions are translocated across the cytoplasmic membrane), and thus conserves the redox energy in a proton gradient. This is NADH-quinone oxidoreductase subunit K from Desulfitobacterium hafniense (strain DSM 10664 / DCB-2).